A 29-amino-acid polypeptide reads, in one-letter code: Dermaseptin-1.2TR (29 aa).

The residue at position 29 (Val-29) is a Valine amide.

In terms of tissue distribution, expressed by the skin glands.

It is found in the secreted. In terms of biological role, has antimicrobial activity. In Phyllomedusa trinitatis (Trinidad leaf frog), this protein is Dermaseptin-1.2TR.